A 22-amino-acid polypeptide reads, in one-letter code: Peptide PGLa-BM3 (22 aa).

Leucine 22 is modified (leucine amide).

Expressed by the skin glands.

Its subcellular location is the secreted. In terms of biological role, antimicrobial peptide. The protein is Peptide PGLa-BM3 of Xenopus boumbaensis (Mawa clawed frog).